Reading from the N-terminus, the 430-residue chain is Tol-Pal system protein TolB (430 aa).

The signal sequence occupies residues 1-26 (MSLMTKLGLRTLVASCLIAVGGAANA).

This sequence belongs to the TolB family. The Tol-Pal system is composed of five core proteins: the inner membrane proteins TolA, TolQ and TolR, the periplasmic protein TolB and the outer membrane protein Pal. They form a network linking the inner and outer membranes and the peptidoglycan layer.

The protein resides in the periplasm. Functionally, part of the Tol-Pal system, which plays a role in outer membrane invagination during cell division and is important for maintaining outer membrane integrity. In Paraburkholderia xenovorans (strain LB400), this protein is Tol-Pal system protein TolB.